We begin with the raw amino-acid sequence, 295 residues long: Nitrogenase iron protein (295 aa).

11-18 (GKGGIGKS) is an ATP binding site. Residue C99 coordinates [4Fe-4S] cluster. The residue at position 102 (R102) is an ADP-ribosylarginine; by dinitrogenase reductase ADP-ribosyltransferase. C133 serves as a coordination point for [4Fe-4S] cluster.

The protein belongs to the NifH/BchL/ChlL family. In terms of assembly, homodimer. [4Fe-4S] cluster is required as a cofactor. The reversible ADP-ribosylation of Arg-102 inactivates the nitrogenase reductase and regulates nitrogenase activity.

It carries out the reaction N2 + 8 reduced [2Fe-2S]-[ferredoxin] + 16 ATP + 16 H2O = H2 + 8 oxidized [2Fe-2S]-[ferredoxin] + 2 NH4(+) + 16 ADP + 16 phosphate + 6 H(+). Functionally, the key enzymatic reactions in nitrogen fixation are catalyzed by the nitrogenase complex, which has 2 components: the iron protein and the molybdenum-iron protein. This Zymomonas mobilis subsp. mobilis (strain ATCC 31821 / ZM4 / CP4) protein is Nitrogenase iron protein.